A 101-amino-acid polypeptide reads, in one-letter code: MNKSKRLFPKSKRSFRRRLPPIQSGDRIDYRNMSLISRFISEQGKILSRRVNRVTLKQQRLITIAIKQARILSLLPFINNQKQFERSESTPRTTSLRTRKK.

It belongs to the bacterial ribosomal protein bS18 family. As to quaternary structure, part of the 30S ribosomal subunit.

It is found in the plastid. The protein localises to the chloroplast. This is Small ribosomal subunit protein bS18c from Aethionema cordifolium (Lebanon stonecress).